The sequence spans 352 residues: uncharacterized protein (352 aa).

This is an uncharacterized protein from Acanthamoeba polyphaga mimivirus (APMV).